A 291-amino-acid chain; its full sequence is Ribosomal large subunit pseudouridine synthase B (291 aa).

Positions 3 to 75 (EKLQKVLARA…ICRVLAYYKP (73 aa)) constitute an S4 RNA-binding domain. Residue D110 is the Nucleophile of the active site. The interval 256–291 (VEKDRRRMKANQIRRAVKRHSQVSGGRRSGGRNNNG) is disordered.

Belongs to the pseudouridine synthase RsuA family.

It catalyses the reaction uridine(2605) in 23S rRNA = pseudouridine(2605) in 23S rRNA. In terms of biological role, responsible for synthesis of pseudouridine from uracil-2605 in 23S ribosomal RNA. This chain is Ribosomal large subunit pseudouridine synthase B (rluB), found in Escherichia coli (strain K12).